The primary structure comprises 479 residues: Nuclear receptor subfamily 6 group A member 1 (479 aa).

The interval 1–32 (MERDERPPSGGGGGGGSAGFLEPPAALPPPPR) is disordered. A compositionally biased stretch (gly residues) spans 9–18 (SGGGGGGGSA). Residues 57–132 (QRTCLICGDR…MGMNRKAIRE (76 aa)) constitute a DNA-binding region (nuclear receptor). Cys-60, Cys-63, Cys-77, Cys-80, Cys-96, Cys-102, Cys-112, and Cys-115 together coordinate Zn(2+). 2 consecutive NR C4-type zinc fingers follow at residues 60–80 (CLIC…CEGC) and 96–120 (CSRD…LLKC). Disordered regions lie at residues 131–150 (REDG…QISE) and 162–198 (FEEE…TLSS). Positions 165–177 (EANHWSNHGDSDH) are enriched in basic and acidic residues. The tract at residues 172–252 (HGDSDHSSPG…RSLDPQSYSL (81 aa)) is sufficient for interaction with UIMC1. Polar residues predominate over residues 178–198 (SSPGNRASESNQPSPGSTLSS). An NR LBD domain is found at 248–479 (QSYSLIHQLV…HSCKTSVGKE (232 aa)).

The protein belongs to the nuclear hormone receptor family. NR6 subfamily. In terms of assembly, homodimer. Interacts with UIMC1.

Its subcellular location is the nucleus. Orphan nuclear receptor that binds to a response element containing the sequence 5'-TCAAGGTCA-3'. Acts as a regulator of embryonic stem cell pluripotency by mediating repression of POU5F1/OCT4: binds to the DR0 element within the POU5F1/OCT4 promoter and inhibits POU5F1/OCT4 expression during embryonic stem cell differentiation. Involved in the regulation of gene expression in germ cell development during gametogenesis. The sequence is that of Nuclear receptor subfamily 6 group A member 1 (NR6A1) from Sus scrofa (Pig).